The following is a 336-amino-acid chain: 7,8-didemethyl-8-hydroxy-5-deazariboflavin synthase (336 aa).

In terms of domain architecture, Radical SAM core spans 18 to 249 (ITYSPAYTLV…TSIAIQVPPN (232 aa)). 3 residues coordinate [4Fe-4S] cluster: Cys32, Cys36, and Cys39.

This sequence belongs to the radical SAM superfamily. CofG family. In terms of assembly, consists of two subunits, CofG and CofH. [4Fe-4S] cluster is required as a cofactor.

It catalyses the reaction 5-amino-5-(4-hydroxybenzyl)-6-(D-ribitylimino)-5,6-dihydrouracil + S-adenosyl-L-methionine = 7,8-didemethyl-8-hydroxy-5-deazariboflavin + 5'-deoxyadenosine + L-methionine + NH4(+) + H(+). Its pathway is cofactor biosynthesis; coenzyme F0 biosynthesis. Catalyzes the radical-mediated synthesis of 7,8-didemethyl-8-hydroxy-5-deazariboflavin from 5-amino-5-(4-hydroxybenzyl)-6-(D-ribitylimino)-5,6-dihydrouracil. This chain is 7,8-didemethyl-8-hydroxy-5-deazariboflavin synthase, found in Synechococcus elongatus (strain ATCC 33912 / PCC 7942 / FACHB-805) (Anacystis nidulans R2).